Reading from the N-terminus, the 478-residue chain is MKTWLMGFSEFLLRYKLVWSETWKIRKQLDTPVREKDENEFLPAHLELIETPVSRRPRLVAYFIMGFLVIAFILSVLGQVEIVATANGKLTLSGRSKEIKPIENSIVKEIIVKEGESVRKGDVLLKLTALGAEADTLKTQSSLLQARLEQIRYQILSRSIELNKLPELKLPDEPYFQNVSEEEVLRLTSLIKEQFSTWQNQKYQKELNLDKKRAERLTILARINRYENVSRVEKSRLDDFRSLLHKQAIAKHAVLEQENKYVEAANELRVYKSQLEQIESEILSAKEEYQLVTQLFKNEILDKLRQTTDSIELLTLELEKNEERQQASVIRAPVSGKVQQLKVHTEGGVVTTAETLMVIVPEDDTLEVTALVQNKDIGFINVGQNAIIKVEAFPYTRYGYLVGKVKNINLDAIEDQKLGLVFNVIVSVEENDLSTGNKHIPLSSGMAVTAEIKTGMRSVISYLLSPLEESVTESLHER.

Residues 1 to 59 (MKTWLMGFSEFLLRYKLVWSETWKIRKQLDTPVREKDENEFLPAHLELIETPVSRRPRL) are Cytoplasmic-facing. A helical; Signal-anchor for type II membrane protein membrane pass occupies residues 60-80 (VAYFIMGFLVIAFILSVLGQV). At 81-478 (EIVATANGKL…ESVTESLHER (398 aa)) the chain is on the periplasmic side.

The protein belongs to the membrane fusion protein (MFP) (TC 8.A.1) family.

It is found in the cell inner membrane. Involved in the transport of hemolysin A. The polypeptide is Hemolysin secretion protein D, chromosomal (hlyD) (Escherichia coli).